A 251-amino-acid polypeptide reads, in one-letter code: Hydroxyacylglutathione hydrolase (251 aa).

The Zn(2+) site is built by H59, H61, D63, H64, H118, D141, and H179.

The protein belongs to the metallo-beta-lactamase superfamily. Glyoxalase II family. In terms of assembly, monomer. Zn(2+) serves as cofactor.

It catalyses the reaction an S-(2-hydroxyacyl)glutathione + H2O = a 2-hydroxy carboxylate + glutathione + H(+). The protein operates within secondary metabolite metabolism; methylglyoxal degradation; (R)-lactate from methylglyoxal: step 2/2. Functionally, thiolesterase that catalyzes the hydrolysis of S-D-lactoyl-glutathione to form glutathione and D-lactic acid. The sequence is that of Hydroxyacylglutathione hydrolase from Prochlorococcus marinus (strain NATL1A).